The primary structure comprises 373 residues: Mitochondrial nicotinamide adenine dinucleotide transporter 1 (373 aa).

The Mitochondrial matrix segment spans residues 1 to 80 (MTQTDNPVPN…WVPLSSTQIT (80 aa)). Solcar repeat units follow at residues 75–166 (SSTQ…SKKF), 174–263 (FDFV…LKVR), and 276–364 (INLQ…FRNR). The chain crosses the membrane as a helical span at residues 81–101 (ALSGAFAGFLSGVAVCPLDVA). Residues 102-141 (KTRLQAQGLQTRFENPYYRGIMGTLSTIVRDEGPRGLYKG) are Mitochondrial intermembrane-facing. A helical transmembrane segment spans residues 142-162 (LVPIVLGYFPTWMIYFSVYEF). The Mitochondrial matrix segment spans residues 163–176 (SKKFFHGIFPQFDF). A helical transmembrane segment spans residues 177-199 (VAQSCAAITAGAASTTLTNPIWV). Over 200-235 (VKTRLMLQSNLGEHPTHYKGTFDAFRKLFYQEGFKA) the chain is Mitochondrial intermembrane. A helical transmembrane segment spans residues 236-256 (LYAGLVPSLLGLFHVAIHFPI). Topologically, residues 257–280 (YEDLKVRFHCYSRENNTNSINLQR) are mitochondrial matrix. Residues 281–297 (LIMASSVSKMIASAVTY) form a helical membrane-spanning segment. Over 298-335 (PHEILRTRMQLKSDIPDSIQRRLFPLIKATYAQEGLKG) the chain is Mitochondrial intermembrane. The helical transmembrane segment at 336 to 358 (FYSGFTTNLVRTIPASAITLVSF) threads the bilayer. Residues 359 to 373 (EYFRNRLENISTMVI) lie on the Mitochondrial matrix side of the membrane.

The protein belongs to the mitochondrial carrier (TC 2.A.29) family.

The protein resides in the mitochondrion inner membrane. It carries out the reaction dAMP(in) + NAD(+)(out) = dAMP(out) + NAD(+)(in). The enzyme catalyses dGMP(in) + NAD(+)(out) = dGMP(out) + NAD(+)(in). The catalysed reaction is GMP(in) + NAD(+)(out) = GMP(out) + NAD(+)(in). It catalyses the reaction AMP(in) + NAD(+)(out) = AMP(out) + NAD(+)(in). It carries out the reaction deamido-NAD(+)(in) + NAD(+)(out) = deamido-NAD(+)(out) + NAD(+)(in). Mitochondrial inner membrane carrier protein that mediates the import of NAD(+) into mitochondria. Can transport NAD(+) by unidirectional transport or by exchange with intramitochondrially generated dAMP and dGMP. Also able to transport NAD(+) by exchange with AMP, GMP or deamido-NAD (+) in vitro. This is Mitochondrial nicotinamide adenine dinucleotide transporter 1 (YIA6) from Saccharomyces cerevisiae (strain ATCC 204508 / S288c) (Baker's yeast).